We begin with the raw amino-acid sequence, 53 residues long: Small polypeptide DEVIL 7 (53 aa).

Residues 1-16 (MREKYTKEEAVKNWEK) show a composition bias toward basic and acidic residues. Residues 1–28 (MREKYTKEEAVKNWEKKKNKPSSPKGVG) are disordered. Residues 22–53 (SSPKGVGEFLKKKKGRFYIIGKCITMLLCSHK) form a required for DVL/RTFL small polypeptide activity region. The helical transmembrane segment at 30–46 (FLKKKKGRFYIIGKCIT) threads the bilayer.

This sequence belongs to the DVL/RTFL small polypeptides family.

Its subcellular location is the cell membrane. In terms of biological role, small polypeptide acting as a regulatory molecule which coordinates cellular responses required for differentiation, growth and development, probably by restricting polar cell proliferation in lateral organs and coordinating socket cell recruitment and differentiation at trichome sites. This chain is Small polypeptide DEVIL 7, found in Arabidopsis thaliana (Mouse-ear cress).